We begin with the raw amino-acid sequence, 249 residues long: NAD(P)H-hydrate epimerase (249 aa).

Residues 11 to 233 (AQQIDVELMS…ELGKKHELNI (223 aa)) enclose the YjeF N-terminal domain. 62–66 (NQGGD) is a binding site for (6S)-NADPHX. Residues Q63 and D127 each contribute to the K(+) site. (6S)-NADPHX-binding positions include 131–137 (GFSFQPP) and D162. S165 provides a ligand contact to K(+).

It belongs to the NnrE/AIBP family. Requires K(+) as cofactor.

The protein localises to the cytoplasm. Its subcellular location is the mitochondrion. It catalyses the reaction (6R)-NADHX = (6S)-NADHX. The catalysed reaction is (6R)-NADPHX = (6S)-NADPHX. In terms of biological role, catalyzes the epimerization of the S- and R-forms of NAD(P)HX, a damaged form of NAD(P)H that is a result of enzymatic or heat-dependent hydration. This is a prerequisite for the S-specific NAD(P)H-hydrate dehydratase to allow the repair of both epimers of NAD(P)HX. This is NAD(P)H-hydrate epimerase from Cryptococcus neoformans var. neoformans serotype D (strain JEC21 / ATCC MYA-565) (Filobasidiella neoformans).